A 542-amino-acid polypeptide reads, in one-letter code: CTP synthase (542 aa).

The amidoligase domain stretch occupies residues 1–265 (MARYVFITGG…DSEVLSAFGI (265 aa)). S13 contacts CTP. Residue S13 coordinates UTP. Position 14–19 (14–19 (SLGKGI)) interacts with ATP. Y54 is an L-glutamine binding site. ATP is bound at residue D71. Mg(2+) is bound by residues D71 and E139. CTP-binding positions include 146-148 (DIE), 186-191 (KTKPTQ), and K222. UTP-binding positions include 186–191 (KTKPTQ) and K222. The 251-residue stretch at 291–541 (TIAVVGKYTG…IEAAIEQSRL (251 aa)) folds into the Glutamine amidotransferase type-1 domain. G353 lines the L-glutamine pocket. C380 functions as the Nucleophile; for glutamine hydrolysis in the catalytic mechanism. Residues 381–384 (FGMQ), E404, and R469 contribute to the L-glutamine site. Active-site residues include H514 and E516.

The protein belongs to the CTP synthase family. Homotetramer.

The enzyme catalyses UTP + L-glutamine + ATP + H2O = CTP + L-glutamate + ADP + phosphate + 2 H(+). It carries out the reaction L-glutamine + H2O = L-glutamate + NH4(+). It catalyses the reaction UTP + NH4(+) + ATP = CTP + ADP + phosphate + 2 H(+). It functions in the pathway pyrimidine metabolism; CTP biosynthesis via de novo pathway; CTP from UDP: step 2/2. Allosterically activated by GTP, when glutamine is the substrate; GTP has no effect on the reaction when ammonia is the substrate. The allosteric effector GTP functions by stabilizing the protein conformation that binds the tetrahedral intermediate(s) formed during glutamine hydrolysis. Inhibited by the product CTP, via allosteric rather than competitive inhibition. Functionally, catalyzes the ATP-dependent amination of UTP to CTP with either L-glutamine or ammonia as the source of nitrogen. Regulates intracellular CTP levels through interactions with the four ribonucleotide triphosphates. The protein is CTP synthase of Brucella canis (strain ATCC 23365 / NCTC 10854 / RM-666).